Consider the following 141-residue polypeptide: Large ribosomal subunit protein uL11 (141 aa).

It belongs to the universal ribosomal protein uL11 family. In terms of assembly, part of the ribosomal stalk of the 50S ribosomal subunit. Interacts with L10 and the large rRNA to form the base of the stalk. L10 forms an elongated spine to which L12 dimers bind in a sequential fashion forming a multimeric L10(L12)X complex. Post-translationally, one or more lysine residues are methylated.

Forms part of the ribosomal stalk which helps the ribosome interact with GTP-bound translation factors. This chain is Large ribosomal subunit protein uL11, found in Selenomonas ruminantium.